The chain runs to 314 residues: ASAAVSAAPTEKEFPKTHSDVSSEQQNLKGQKGSNGGSMKLHTTDQSTFDIWRKKLQDLEFSSESPSKETSDSPWRSDILIDENCLLSPLAGEDDSFLLEGSSNEDCKPLLLPDAKPKIKDNGDLILPSPNSVPLPQVKTEKEDFIELCTPGVIKQEKLGPVYCQASFPGANIIGNKMSAISVHGVSTSGGQMYHYDMNTASLSQQQDQKPIFKVIPPIPVGSENWNRCQGSGDDSLTSLGTLNFSGRSVFSNGYSSPGMRPDVSSPPSSSSAATGPPPKLCLVCSDEASGCHYGVLTCGSCKVFFKRAVEGQH.

The disordered stretch occupies residues 1–44 (ASAAVSAAPTEKEFPKTHSDVSSEQQNLKGQKGSNGGSMKLHTT). A modulating region spans residues 1–281 (ASAAVSAAPT…SAATGPPPKL (281 aa)). Basic and acidic residues predominate over residues 10-21 (TEKEFPKTHSDV). 3 positions are modified to phosphoserine: Ser65, Ser73, and Ser88. Lys120 participates in a covalent cross-link: Glycyl lysine isopeptide (Lys-Gly) (interchain with G-Cter in SUMO2). Ser129 is modified (phosphoserine). Glycyl lysine isopeptide (Lys-Gly) (interchain with G-Cter in SUMO); alternate cross-links involve residues Lys139 and Lys155. Glycyl lysine isopeptide (Lys-Gly) (interchain with G-Cter in SUMO2); alternate cross-links involve residues Lys139 and Lys155. Phosphoserine is present on Ser266. Lys280 participates in a covalent cross-link: Glycyl lysine isopeptide (Lys-Gly) (interchain with G-Cter in ubiquitin). Residues 282–314 (CLVCSDEASGCHYGVLTCGSCKVFFKRAVEGQH) form an NR C4-type zinc finger. Positions 282-314 (CLVCSDEASGCHYGVLTCGSCKVFFKRAVEGQH) form a DNA-binding region, nuclear receptor.

Belongs to the nuclear hormone receptor family. NR3 subfamily. In terms of assembly, heteromultimeric cytoplasmic complex with HSP90AA1, HSPA1A/HSPA1B, and FKBP5 or another immunophilin such as PPID, STIP1, or the immunophilin homolog PPP5C. Upon ligand binding FKBP5 dissociates from the complex and FKBP4 takes its place, thereby linking the complex to dynein and mediating transport to the nucleus, where the complex dissociates. Probably forms a complex composed of chaperones HSP90 and HSP70, co-chaperones CDC37, PPP5C, TSC1 and client protein TSC2, CDK4, AKT, RAF1 and NR3C1; this complex does not contain co-chaperones STIP1/HOP and PTGES3/p23. Directly interacts with UNC45A. Binds to DNA as a homodimer, and as heterodimer with NR3C2 or the retinoid X receptor. Binds STAT5A and STAT5B homodimers and heterodimers. Interacts with NRIP1, POU2F1, POU2F2 and TRIM28. Interacts with several coactivator complexes, including the SMARCA4 complex, CREBBP/EP300, TADA2L (Ada complex) and p160 coactivators such as NCOA2 and NCOA6. Interaction with BAG1 inhibits transactivation. Interacts with HEXIM1 and TGFB1I1. Interacts with NCOA1. Interacts with NCOA3, SMARCA4, SMARCC1, SMARCD1, and SMARCE1. Interacts with CLOCK, CRY1 and CRY2 in a ligand-dependent fashion. Interacts with CIART. Interacts with RWDD3. Interacts with UBE2I/UBC9 and this interaction is enhanced in the presence of RWDD3. Interacts with GRIP1. Interacts with NR4A3 (via nuclear receptor DNA-binding domain), represses transcription activity of NR4A3 on the POMC promoter Nur response element (NurRE). Directly interacts with PNRC2 to attract and form a complex with UPF1 and DCP1A; the interaction leads to rapid mRNA degradation. Interacts with GSK3B. Interacts with FNIP1 and FNIP2. Interacts (via C-terminus) with HNRNPU (via C-terminus). Interacts with MCM3AP. Interacts (via domain NR LBD) with HSP90AA1 and HSP90AB1. In the absence of hormonal ligand, interacts with TACC1. Interacts (via NR LBD domain) with ZNF764 (via KRAB domain); the interaction regulates transcription factor activity of NR3C1 by directing its actions toward certain biologic pathways. Post-translationally, acetylation by CLOCK reduces its binding to glucocorticoid response elements and its transcriptional activity. In terms of processing, increased proteasome-mediated degradation in response to glucocorticoids. Phosphorylated in the absence of hormone; becomes hyperphosphorylated in the presence of glucocorticoid. The Ser-65, Ser-88 and Ser-266-phosphorylated forms are mainly cytoplasmic, and the Ser-73-phosphorylated form is nuclear. Phosphorylation at Ser-73 increases transcriptional activity. Phosphorylation at Ser-65, Ser-88 and Ser-266 decreases signaling capacity. Phosphorylation at Ser-266 may protect from glucocorticoid-induced apoptosis. Phosphorylation at Ser-65 and Ser-73 is not required in regulation of chromosome segregation. May be dephosphorylated by PPP5C, attenuates NR3C1 action. Post-translationally, ubiquitinated by UBR5, leading to its degradation: UBR5 specifically recognizes and binds ligand-bound NR3C1 when it is not associated with coactivators (NCOAs). In presence of NCOAs, the UBR5-degron is not accessible, preventing its ubiquitination and degradation. In terms of processing, sumoylation at Lys-139 and Lys-155 negatively regulates its transcriptional activity. Heat shock increases sumoylation in a RWDD3-dependent manner.

The protein localises to the cytoplasm. It is found in the nucleus. The protein resides in the mitochondrion. Its subcellular location is the cytoskeleton. It localises to the spindle. The protein localises to the microtubule organizing center. It is found in the centrosome. The protein resides in the chromosome. Its subcellular location is the nucleoplasm. Receptor for glucocorticoids (GC). Has a dual mode of action: as a transcription factor that binds to glucocorticoid response elements (GRE), both for nuclear and mitochondrial DNA, and as a modulator of other transcription factors. Affects inflammatory responses, cellular proliferation and differentiation in target tissues. Involved in chromatin remodeling. Plays a role in rapid mRNA degradation by binding to the 5' UTR of target mRNAs and interacting with PNRC2 in a ligand-dependent manner which recruits the RNA helicase UPF1 and the mRNA-decapping enzyme DCP1A, leading to RNA decay. Could act as a coactivator for STAT5-dependent transcription upon growth hormone (GH) stimulation and could reveal an essential role of hepatic GR in the control of body growth. Mediates glucocorticoid-induced apoptosis. Promotes accurate chromosome segregation during mitosis. May act as a tumor suppressor. May play a negative role in adipogenesis through the regulation of lipolytic and antilipogenic gene expression. In Ovis aries (Sheep), this protein is Glucocorticoid receptor (NR3C1).